The following is a 58-amino-acid chain: Small ribosomal subunit protein bS21 (58 aa).

Residues 28 to 58 (VLQDIRKHEHYEKPSIKKKKKSEAARKKKRF) form a disordered region. Residues 31–42 (DIRKHEHYEKPS) show a composition bias toward basic and acidic residues. Residues 43–58 (IKKKKKSEAARKKKRF) show a composition bias toward basic residues.

It belongs to the bacterial ribosomal protein bS21 family.

The protein is Small ribosomal subunit protein bS21 of Syntrophomonas wolfei subsp. wolfei (strain DSM 2245B / Goettingen).